A 290-amino-acid chain; its full sequence is MLARFPLYLRLVRMDKPIGSLLLLWPTLNALWIASDGHPRWPLLAIFALGTLLMRSAGCAMNDYADRDFDRHVKRTADRPLTSGKIRAWEAVAIAVVLAFISFLLIQPLNTLTKELSVVALFVAGSYPFMKRFFAIPQAYLGIAFGFGIPMAFAAVQDTVPMLAWVMLIANIFWSVAYDTEYAMVDRDDDIKIGIRTSALTFGRFDVAAVMLCYAATLGIYVWIGVTLGFGLAYWAGWAAAVGCALYHYTLIKDRERMPCFAAFRHNNWLGGVLFAGIAAHYLLAGTAGN.

The next 6 membrane-spanning stretches (helical) occupy residues 41–61 (WPLL…GCAM), 89–109 (WEAV…IQPL), 133–153 (FFAI…PMAF), 158–178 (DTVP…SVAY), 202–224 (FGRF…YVWI), and 269–289 (WLGG…GTAG).

It belongs to the UbiA prenyltransferase family. Mg(2+) is required as a cofactor.

Its subcellular location is the cell inner membrane. The enzyme catalyses all-trans-octaprenyl diphosphate + 4-hydroxybenzoate = 4-hydroxy-3-(all-trans-octaprenyl)benzoate + diphosphate. Its pathway is cofactor biosynthesis; ubiquinone biosynthesis. Functionally, catalyzes the prenylation of para-hydroxybenzoate (PHB) with an all-trans polyprenyl group. Mediates the second step in the final reaction sequence of ubiquinone-8 (UQ-8) biosynthesis, which is the condensation of the polyisoprenoid side chain with PHB, generating the first membrane-bound Q intermediate 3-octaprenyl-4-hydroxybenzoate. The chain is 4-hydroxybenzoate octaprenyltransferase from Burkholderia ambifaria (strain MC40-6).